The sequence spans 138 residues: Phospholipase A2 EC3 (138 aa).

The first 16 residues, 1 to 16, serve as a signal peptide directing secretion; that stretch reads MRTLWIVAVWLMGVEG. Intrachain disulfides connect Cys-42–Cys-131, Cys-44–Cys-60, Cys-59–Cys-111, Cys-65–Cys-138, Cys-66–Cys-104, Cys-73–Cys-97, and Cys-91–Cys-102. Positions 43, 45, and 47 each coordinate Ca(2+). The active site involves His-63. Asp-64 contributes to the Ca(2+) binding site. The active site involves Asp-105.

This sequence belongs to the phospholipase A2 family. Group II subfamily. Ca(2+) is required as a cofactor.

It is found in the secreted. The enzyme catalyses a 1,2-diacyl-sn-glycero-3-phosphocholine + H2O = a 1-acyl-sn-glycero-3-phosphocholine + a fatty acid + H(+). In terms of biological role, PA2 catalyzes the calcium-dependent hydrolysis of the 2-acyl groups in 3-sn-phosphoglycerides. The polypeptide is Phospholipase A2 EC3 (Echis coloratus (Carpet viper)).